The sequence spans 2185 residues: Genome polyprotein (2185 aa).

Gly2 is lipidated: N-myristoyl glycine; by host. Over Gly2–Gln1495 the chain is Cytoplasmic. The amphipathic alpha-helix stretch occupies residues Phe568–Val584. Catalysis depends on for protease 2A activity residues His872 and Asp890. Positions 907 and 909 each coordinate Zn(2+). The For protease 2A activity role is filled by Cys961. Residues Cys967 and His969 each contribute to the Zn(2+) site. A membrane-binding region spans residues Asn1101–Gln1173. The segment at Asn1101–Thr1239 is oligomerization. The interval Ala1122–Gln1126 is RNA-binding. Positions Glu1205–Asn1361 constitute an SF3 helicase domain. Zn(2+) is bound by residues Cys1369, Cys1381, and Cys1386. Residues Cys1369 to Cys1386 form a C4-type; degenerate zinc finger. Positions Glu1413–Val1420 are RNA-binding. An oligomerization region spans residues Leu1424–Gln1429. Residues Ala1496–Tyr1511 lie within the membrane without spanning it. Topologically, residues Lys1512–Phe2185 are cytoplasmic. Tyr1521 is subject to O-(5'-phospho-RNA)-tyrosine. The region spanning Gly1541 to Phe1719 is the Peptidase C3 domain. Residues His1580, Glu1611, and Cys1687 each act as for protease 3C activity in the active site. Positions Gly1950–Leu2066 constitute a RdRp catalytic domain. Mg(2+) is bound by residues Asp1956 and Asp2052.

The protein belongs to the picornaviruses polyprotein family. In terms of assembly, interacts with capsid protein VP1 and capsid protein VP3 to form heterotrimeric protomers. As to quaternary structure, interacts with capsid protein VP0, and capsid protein VP3 to form heterotrimeric protomers. Five protomers subsequently associate to form pentamers which serve as building blocks for the capsid. Interacts with capsid protein VP2, capsid protein VP3 and capsid protein VP4 following cleavage of capsid protein VP0. Interacts with host CD55. Interacts with host CXADR. Interacts with capsid protein VP1 and capsid protein VP3 in the mature capsid. In terms of assembly, interacts with capsid protein VP0 and capsid protein VP1 to form heterotrimeric protomers. Five protomers subsequently associate to form pentamers which serve as building blocks for the capsid. Interacts with capsid protein VP4 in the mature capsid. Interacts with protein 2C; this interaction may be important for virion morphogenesis. As to quaternary structure, interacts with capsid protein VP1 and capsid protein VP3. Homodimer. In terms of assembly, homohexamer; forms a hexameric ring structure with 6-fold symmetry characteristic of AAA+ ATPases. Interacts (via N-terminus) with host RTN3 (via reticulon domain); this interaction is important for viral replication. Interacts with capsid protein VP3; this interaction may be important for virion morphogenesis. As to quaternary structure, interacts with protein 3CD. Homodimer. Interacts with host GBF1. Interacts (via GOLD domain) with host ACBD3 (via GOLD domain); this interaction allows the formation of a viral protein 3A/ACBD3 heterotetramer with a 2:2 stoichiometry, which will stimulate the recruitment of host PI4KB in order to synthesize PI4P at the viral RNA replication sites. In terms of assembly, interacts with RNA-directed RNA polymerase. As to quaternary structure, interacts with host TICAM1 (via C-terminus). Interacts with protein 3AB and with RNA-directed RNA polymerase. In terms of assembly, interacts with Viral protein genome-linked and with protein 3CD. Requires Mg(2+) as cofactor. In terms of processing, specific enzymatic cleavages in vivo by the viral proteases yield processing intermediates and the mature proteins. Post-translationally, myristoylation is required for the formation of pentamers during virus assembly. Further assembly of 12 pentamers and a molecule of genomic RNA generates the provirion. During virion maturation, immature virions are rendered infectious following cleavage of VP0 into VP4 and VP2. This maturation seems to be an autocatalytic event triggered by the presence of RNA in the capsid and it is followed by a conformational change infectious virion. In terms of processing, myristoylation is required during RNA encapsidation and formation of the mature virus particle. Post-translationally, VPg is uridylylated by the polymerase into VPg-pUpU. This acts as a nucleotide-peptide primer for the genomic RNA replication.

The protein resides in the virion. It is found in the host cytoplasm. It localises to the host cytoplasmic vesicle membrane. The protein localises to the host nucleus. The catalysed reaction is a ribonucleoside 5'-triphosphate + H2O = a ribonucleoside 5'-diphosphate + phosphate + H(+). It catalyses the reaction Selective cleavage of Tyr-|-Gly bond in the picornavirus polyprotein.. It carries out the reaction RNA(n) + a ribonucleoside 5'-triphosphate = RNA(n+1) + diphosphate. The enzyme catalyses Selective cleavage of Gln-|-Gly bond in the poliovirus polyprotein. In other picornavirus reactions Glu may be substituted for Gln, and Ser or Thr for Gly.. Replication or transcription is subject to high level of random mutations by the nucleotide analog ribavirin. In terms of biological role, forms an icosahedral capsid of pseudo T=3 symmetry with capsid proteins VP2 and VP3. The capsid is 300 Angstroms in diameter, composed of 60 copies of each capsid protein and enclosing the viral positive strand RNA genome. Capsid protein VP1 mainly forms the vertices of the capsid. Capsid protein VP1 interacts with host CD55 and CXADR to provide virion attachment to target host cells. This attachment induces virion internalization. Tyrosine kinases are probably involved in the entry process. After binding to its receptor, the capsid undergoes conformational changes. Capsid protein VP1 N-terminus (that contains an amphipathic alpha-helix) and capsid protein VP4 are externalized. Together, they shape a pore in the host membrane through which viral genome is translocated to host cell cytoplasm. Forms an icosahedral capsid of pseudo T=3 symmetry with capsid proteins VP2 and VP3. The capsid is 300 Angstroms in diameter, composed of 60 copies of each capsid protein and enclosing the viral positive strand RNA genome. Its function is as follows. Lies on the inner surface of the capsid shell. After binding to the host receptor, the capsid undergoes conformational changes. Capsid protein VP4 is released, Capsid protein VP1 N-terminus is externalized, and together, they shape a pore in the host membrane through which the viral genome is translocated into the host cell cytoplasm. Functionally, component of immature procapsids, which is cleaved into capsid proteins VP4 and VP2 after maturation. Allows the capsid to remain inactive before the maturation step. In terms of biological role, cysteine protease that cleaves viral polyprotein and specific host proteins. It is responsible for the autocatalytic cleavage between the P1 and P2 regions, which is the first cleavage occurring in the polyprotein. Also cleaves the host translation initiation factor EIF4G1, in order to shut down the capped cellular mRNA translation. Inhibits the host nucleus-cytoplasm protein and RNA trafficking by cleaving host members of the nuclear pores. Counteracts stress granule formation probably by antagonizing its assembly or promoting its dissassembly. Cleaves and inhibits host IFIH1/MDA5, thereby inhibiting the type-I IFN production and the establishment of the antiviral state. Cleaves and inhibits host MAVS, thereby inhibiting the type-I IFN production and the establishment of the antiviral state. Plays an essential role in the virus replication cycle by acting as a viroporin. Creates a pore in the host endoplasmic reticulum and as a consequence releases Ca2+ in the cytoplasm of infected cell. In turn, high levels of cytoplasmic calcium may trigger membrane trafficking and transport of viral ER-associated proteins to viroplasms, sites of viral genome replication. Its function is as follows. Induces and associates with structural rearrangements of intracellular membranes. Displays RNA-binding, nucleotide binding and NTPase activities. May play a role in virion morphogenesis and viral RNA encapsidation by interacting with the capsid protein VP3. Functionally, localizes the viral replication complex to the surface of membranous vesicles. Together with protein 3CD binds the Cis-Active RNA Element (CRE) which is involved in RNA synthesis initiation. Acts as a cofactor to stimulate the activity of 3D polymerase, maybe through a nucleid acid chaperone activity. In terms of biological role, localizes the viral replication complex to the surface of membranous vesicles. It inhibits host cell endoplasmic reticulum-to-Golgi apparatus transport and causes the disassembly of the Golgi complex, possibly through GBF1 interaction. This would result in depletion of MHC, trail receptors and IFN receptors at the host cell surface. Plays an essential role in viral RNA replication by recruiting ACBD3 and PI4KB at the viral replication sites, thereby allowing the formation of the rearranged membranous structures where viral replication takes place. Acts as a primer for viral RNA replication and remains covalently bound to viral genomic RNA. VPg is uridylylated prior to priming replication into VPg-pUpU. The oriI viral genomic sequence may act as a template for this. The VPg-pUpU is then used as primer on the genomic RNA poly(A) by the RNA-dependent RNA polymerase to replicate the viral genome. During genome replication, the VPg-RNA linkage is removed by the host TDP2, thereby accelerating replication. During the late stage of the replication cycle, host TDP2 is excluded from sites of viral RNA synthesis and encapsidation, allowing for the generation of progeny virions. Its function is as follows. Involved in the viral replication complex and viral polypeptide maturation. It exhibits protease activity with a specificity and catalytic efficiency that is different from protease 3C. Protein 3CD lacks polymerase activity. Protein 3CD binds to the 5'UTR of the viral genome. Functionally, major viral protease that mediates proteolytic processing of the polyprotein. Cleaves host EIF5B, contributing to host translation shutoff. Cleaves also host PABPC1, contributing to host translation shutoff. Cleaves and inhibits host RIGI, thereby inhibiting the type-I IFN production and the establishment of the antiviral state. Cleaves and inhibits host MAVS, thereby inhibiting the type-I IFN production and the establishment of the antiviral state. Cleaves and inhibits host TICAM1/TRIF, thereby inhibiting the type-I IFN production. Cleaves host NLRP1, triggers host N-glycine-mediated degradation of the autoinhibitory NLRP1 N-terminal fragment. Cleaves host transcription factor TFEB, thereby disrupting host lysosomal functions and enhancing viral infection. In terms of biological role, replicates the viral genomic RNA on the surface of intracellular membranes. May form linear arrays of subunits that propagate along a strong head-to-tail interaction called interface-I. Covalently attaches UMP to a tyrosine of VPg, which is used to prime RNA synthesis. The positive stranded RNA genome is first replicated at virus induced membranous vesicles, creating a dsRNA genomic replication form. This dsRNA is then used as template to synthesize positive stranded RNA genomes. ss(+)RNA genomes are either translated, replicated or encapsidated. The sequence is that of Genome polyprotein from Coxsackievirus B3 (strain Nancy).